A 279-amino-acid polypeptide reads, in one-letter code: Single-strand selective monofunctional uracil DNA glycosylase (279 aa).

The substrate site is built by Met86, Phe100, and Asn165. Positions 175 to 189 (SGRNLTPAELPAKQR) are DNA-binding. His241 lines the substrate pocket.

Belongs to the uracil-DNA glycosylase (UDG) superfamily. SMUG1 family.

Its subcellular location is the nucleus. Recognizes base lesions in the genome and initiates base excision DNA repair. Acts as a monofunctional DNA glycosylase specific for uracil (U) residues in DNA with a preference for single-stranded DNA substrates. The activity is greater toward mismatches (U/G) compared to matches (U/A). Excises uracil (U), 5-formyluracil (fU) and uracil derivatives bearing an oxidized group at C5 [5-hydroxyuracil (hoU) and 5-hydroxymethyluracil (hmU)] in ssDNA and dsDNA, but not analogous cytosine derivatives (5-hydroxycytosine and 5-formylcytosine), nor other oxidized bases. The activity is damage-specific and salt-dependent. The substrate preference is the following: ssDNA &gt; dsDNA (G pair) = dsDNA (A pair) at low salt concentration, and dsDNA (G pair) &gt; dsDNA (A pair) &gt; ssDNA at high salt concentration. In Mus musculus (Mouse), this protein is Single-strand selective monofunctional uracil DNA glycosylase (Smug1).